The following is a 557-amino-acid chain: MTTTSEISLQEEYVTDAVDHRGLAARRSNTGRWRAALFIIGVEVAERFAYYGIGSNLISYLTGPLGESTAVAAANVNAWSGIATLLPVLGAFVADAFLGRYRTIIISSLIYVLGLAFLTLSAFLIPNTTEVTSSTSSFLNVLFFFSLYLVAIGQSGHKPCVQAFGADQFDEKDSQEKSDRSSFFNWWYLSLSAGICFAILVVVYIQEEFSWAFGFGIPCVFMVISLVLFVSGRRIYRYSKRRHEEEINPFTRIGRVFFVALKNQRLSSSDLCKVELEANTSPEKQSFFNKALLVPNDSSQGENASKSSDVEDATALIRLIPVWFTTLAYAIPYAQYMTFFTKQGVTMDRTILPGVKIPPASLQVFIGISIVLFVPIYDRVFVPIARLITKEPCGITTLKRIGTGIVLSTITMVIAALVEFKRLETAKEHGLIDQPEATLPMSIWWLIPQYLLLGLADVYTLVGMQEFFYSQVPTELRSIGLALYLSALGVGSLLSSLLISLIDLATGGDAGNSWFNSNLNRAHLDYFYWLLAIVSAVGFFTFLFISKSYIYRRVDRV.

The next 2 helical transmembrane spans lie at 35–55 and 78–98; these read AALF…GIGS and AWSG…DAFL. Thr-103 carries the phosphothreonine modification. Helical transmembrane passes span 104-124, 133-153, 183-203, 209-229, 320-340, 357-377, 401-421, 443-463, 479-499, and 526-546; these read IIIS…SAFL, SSTS…VAIG, FFNW…LVVV, FSWA…LVLF, IPVW…MTFF, IPPA…VPIY, IGTG…VEFK, IWWL…TLVG, IGLA…SLLI, and YFYW…LFIS.

This sequence belongs to the major facilitator superfamily. Proton-dependent oligopeptide transporter (POT/PTR) (TC 2.A.17) family. As to expression, expressed in roots.

The protein localises to the membrane. This is Protein NRT1/ PTR FAMILY 5.14 (NPF5.14) from Arabidopsis thaliana (Mouse-ear cress).